The sequence spans 159 residues: SsrA-binding protein (159 aa).

Residues 133–147 (KRQDLAKRDAQREMA) show a composition bias toward basic and acidic residues. The interval 133–159 (KRQDLAKRDAQREMARAAGRRSKGMDD) is disordered. A compositionally biased stretch (basic residues) spans 150 to 159 (AGRRSKGMDD).

This sequence belongs to the SmpB family.

The protein localises to the cytoplasm. Required for rescue of stalled ribosomes mediated by trans-translation. Binds to transfer-messenger RNA (tmRNA), required for stable association of tmRNA with ribosomes. tmRNA and SmpB together mimic tRNA shape, replacing the anticodon stem-loop with SmpB. tmRNA is encoded by the ssrA gene; the 2 termini fold to resemble tRNA(Ala) and it encodes a 'tag peptide', a short internal open reading frame. During trans-translation Ala-aminoacylated tmRNA acts like a tRNA, entering the A-site of stalled ribosomes, displacing the stalled mRNA. The ribosome then switches to translate the ORF on the tmRNA; the nascent peptide is terminated with the 'tag peptide' encoded by the tmRNA and targeted for degradation. The ribosome is freed to recommence translation, which seems to be the essential function of trans-translation. The sequence is that of SsrA-binding protein from Salinispora arenicola (strain CNS-205).